A 231-amino-acid polypeptide reads, in one-letter code: MDDPSATLLPEHSEDLRLARDAELKKVLKLKLVLDELRRLDVGPNPSDEIKRALKLVSIGSYARLGEMEGAGQEQVLGLPSGSSFPPLNYTDRKTVRTKLSAQLRTTLQPIAELCDRIREEFPDAFGQEADLSCDQKEILRLEEEHRSGLEKLVALLTRKCTLLKETAELKLGPQLANELKLQQAQAQLVQTKAELLRGFFVHEAASRTEHSVKAHKEVEAHLDELLAAKK.

Residues 128–199 (QEADLSCDQK…VQTKAELLRG (72 aa)) adopt a coiled-coil conformation.

In terms of assembly, component of the augmin complex composed of dgt2, dgt3, dgt4, dgt5, dgt6, msd1, msd5 and wac. The complex interacts directly or indirectly with microtubules and is required for centrosome-independent generation of spindle microtubules. dgt2 interacts directly with wac (via coiled coil). In terms of tissue distribution, in adult females, detected only in the abdomen with no expression in the head or thorax (at protein level).

Its subcellular location is the cytoplasm. It localises to the cytoskeleton. The protein localises to the spindle. It is found in the spindle pole. In terms of biological role, as part of the augmin complex, plays a role in centrosome-independent generation of spindle microtubules. The complex is required for mitotic spindle assembly through its involvement in localizing gamma-tubulin to spindle microtubules. dgt2 binds to microtubules in vitro. This Drosophila melanogaster (Fruit fly) protein is Augmin complex subunit dgt2.